The primary structure comprises 63 residues: Large ribosomal subunit protein bL33 (63 aa).

This sequence belongs to the bacterial ribosomal protein bL33 family.

The chain is Large ribosomal subunit protein bL33 from Gloeobacter violaceus (strain ATCC 29082 / PCC 7421).